We begin with the raw amino-acid sequence, 293 residues long: Peptidoglycan deacetylase (293 aa).

Asp14, His86, and His90 together coordinate Zn(2+). The region spanning 29 to 276 is the NodB homology domain; that stretch reads PDDISRGLFA…INKHEGVRWV (248 aa).

This sequence belongs to the polysaccharide deacetylase family. In terms of assembly, homotetramer.

It carries out the reaction Deacetylation of xylans and xylo-oligosaccharides.. In terms of biological role, catalyzes the N-deacetylation of peptidoglycan (PG), an important mechanism that appears to confer lysozyme resistance and to mitigate host immune detection; this likely contributes to pathogen persistence in the host. The exact nature of the residue in PG that is deacetylated has not been determined. Is also able to catalyze the deacetylation of acetylated xylan, and, to a lesser extent, that of chitin and chitosan. Therefore, this enzyme might play a role during infection, considering that xylan-containing carbohydrate structures are among those commonly consumed by humans. The polypeptide is Peptidoglycan deacetylase (pgdA) (Helicobacter pylori (strain ATCC 700392 / 26695) (Campylobacter pylori)).